A 424-amino-acid chain; its full sequence is CinA-like protein (424 aa).

It belongs to the CinA family.

This Shewanella piezotolerans (strain WP3 / JCM 13877) protein is CinA-like protein.